The sequence spans 191 residues: Probable DNA-directed RNA polymerase subunit delta (191 aa).

One can recognise an HTH HARE-type domain in the interval 14-83; the sequence is LSMIEVARAI…GENKWGLRSW (70 aa). Positions 119–191 are disordered; that stretch reads EDAIDYRDDD…EDEEDEEPVL (73 aa).

RNAP is composed of a core of 2 alpha, a beta and a beta' subunits. The core is associated with a delta subunit and one of several sigma factors.

Its function is as follows. Participates in both the initiation and recycling phases of transcription. In the presence of the delta subunit, RNAP displays an increased specificity of transcription, a decreased affinity for nucleic acids, and an increased efficiency of RNA synthesis because of enhanced recycling. The polypeptide is Probable DNA-directed RNA polymerase subunit delta (Streptococcus pyogenes serotype M6 (strain ATCC BAA-946 / MGAS10394)).